Here is a 788-residue protein sequence, read N- to C-terminus: Autophagy-related protein 9 (788 aa).

Residues 1–171 (MTDKSTFLSV…EAYMYYTGKG (171 aa)) are Cytoplasmic-facing. Basic and acidic residues predominate over residues 32–42 (ILRRVEEEHAQ). A disordered region spans residues 32–127 (ILRRVEEEHA…TGVANGGLPR (96 aa)). The segment covering 44–58 (SDNSNSDNDSGNDSD) has biased composition (low complexity). Polar residues predominate over residues 101–112 (SFAQGTKTQTPI). Residues 172 to 192 (LVSIILSRVLNMSTIMFVVVF) form a helical membrane-spanning segment. Over 193-222 (STYLGSCIDYSKIKGSRTLDEVHVKQCYAK) the chain is Lumenal. Residues 223–243 (LGSFHVFVLWTFFVLWFMKLF) traverse the membrane as a helical segment. The Cytoplasmic segment spans residues 244-390 (QYVKDIRRLV…QILSTGLRRR (147 aa)). An intramembrane region is located at residue Phe391. At 392–479 (VFAAIMNVVF…PKEKTALVSK (88 aa)) the chain is on the cytoplasmic side. A helical membrane pass occupies residues 480-500 (FVSFIAGSFAAVLGIASLIDP). Residues 501-512 (ELFLMFEISANR) lie on the Lumenal side of the membrane. A helical membrane pass occupies residues 513-533 (TVLFYIGVFGSILAVSRSLIP). Topologically, residues 534 to 579 (EETLVFDPEISLRYVAEFTHYLPPEWEGKLHTEQVKNEFSLMYEMR) are cytoplasmic. An intramembrane segment occupies 580–600 (LIILLKELASIFLAPFILYYS). At 601-788 (LTQSCDDIVD…KKTDNMNLGA (188 aa)) the chain is on the cytoplasmic side. The tract at residues 715–736 (LSPAAPTATTATSGTATGAAPR) is disordered. The span at 716-734 (SPAAPTATTATSGTATGAA) shows a compositional bias: low complexity.

The protein belongs to the ATG9 family. As to quaternary structure, homotrimer; forms a homotrimer with a central pore that forms a path between the two membrane leaflets. Phosphorylated by ATG1. ATG1 phosphorylation is required for preautophagosome elongation.

Its subcellular location is the preautophagosomal structure membrane. It is found in the cytoplasmic vesicle membrane. It localises to the golgi apparatus membrane. The protein resides in the endoplasmic reticulum membrane. The catalysed reaction is a 1,2-diacyl-sn-glycero-3-phosphocholine(in) = a 1,2-diacyl-sn-glycero-3-phosphocholine(out). It carries out the reaction a 1,2-diacyl-sn-glycero-3-phospho-L-serine(in) = a 1,2-diacyl-sn-glycero-3-phospho-L-serine(out). It catalyses the reaction a 1,2-diacyl-sn-glycero-3-phosphoethanolamine(in) = a 1,2-diacyl-sn-glycero-3-phosphoethanolamine(out). The enzyme catalyses a 1,2-diacyl-sn-glycero-3-phospho-(1D-myo-inositol-3-phosphate)(in) = a 1,2-diacyl-sn-glycero-3-phospho-(1D-myo-inositol-3-phosphate)(out). In terms of biological role, phospholipid scramblase involved in autophagy and cytoplasm to vacuole transport (Cvt) vesicle formation. Cycles between the preautophagosomal structure/phagophore assembly site (PAS) and the cytoplasmic vesicle pool and supplies membrane for the growing autophagosome. Lipid scramblase activity plays a key role in preautophagosomal structure/phagophore assembly by distributing the phospholipids that arrive through ATG2 from the cytoplasmic to the luminal leaflet of the bilayer, thereby driving autophagosomal membrane expansion. Required for mitophagy. Also involved in endoplasmic reticulum-specific autophagic process and is essential for the survival of cells subjected to severe ER stress. Different machineries are required for anterograde trafficking to the PAS during either the Cvt pathway or bulk autophagy and for retrograde trafficking. This is Autophagy-related protein 9 from Yarrowia lipolytica (strain CLIB 122 / E 150) (Yeast).